A 213-amino-acid polypeptide reads, in one-letter code: EEF1A lysine methyltransferase 1 (213 aa).

Belongs to the class I-like SAM-binding methyltransferase superfamily. EFM5 family.

It is found in the cytoplasm. It carries out the reaction L-lysyl-[protein] + 3 S-adenosyl-L-methionine = N(6),N(6),N(6)-trimethyl-L-lysyl-[protein] + 3 S-adenosyl-L-homocysteine + 3 H(+). Functionally, protein-lysine methyltransferase that selectively catalyzes the trimethylation of EEF1A at 'Lys-79'. In Gallus gallus (Chicken), this protein is EEF1A lysine methyltransferase 1.